The chain runs to 229 residues: Ribonuclease 3 (229 aa).

Residues 4-133 (WEELQESVGF…FIGALYLDNG (130 aa)) form the RNase III domain. Glutamate 46 lines the Mg(2+) pocket. The active site involves aspartate 50. Residues aspartate 119 and glutamate 122 each coordinate Mg(2+). Residue glutamate 122 is part of the active site. A DRBM domain is found at 159-228 (DYKTQLQEIV…AQFAINQLTH (70 aa)).

This sequence belongs to the ribonuclease III family. In terms of assembly, homodimer. Mg(2+) is required as a cofactor.

The protein localises to the cytoplasm. The enzyme catalyses Endonucleolytic cleavage to 5'-phosphomonoester.. Digests double-stranded RNA. Involved in the processing of primary rRNA transcript to yield the immediate precursors to the large and small rRNAs (23S and 16S). Processes some mRNAs, and tRNAs when they are encoded in the rRNA operon. Processes pre-crRNA and tracrRNA of type II CRISPR loci if present in the organism. This is Ribonuclease 3 from Listeria innocua serovar 6a (strain ATCC BAA-680 / CLIP 11262).